The primary structure comprises 299 residues: Small ribosomal subunit protein uS3 (299 aa).

Residues 39–107 (VREYLKAKLK…PVAVNIEEVR (69 aa)) enclose the KH type-2 domain. The interval 214–299 (PVIKTDERED…AVAPGDAKGE (86 aa)) is disordered. The span at 217 to 248 (KTDEREDDRRNRRGPRSDRPAGDRRPPSRDGA) shows a compositional bias: basic and acidic residues. Positions 257–282 (ADAGAAAPTDKPADGAAPAAADGPKA) are enriched in low complexity.

Belongs to the universal ribosomal protein uS3 family. Part of the 30S ribosomal subunit. Forms a tight complex with proteins S10 and S14.

Binds the lower part of the 30S subunit head. Binds mRNA in the 70S ribosome, positioning it for translation. This is Small ribosomal subunit protein uS3 from Methylibium petroleiphilum (strain ATCC BAA-1232 / LMG 22953 / PM1).